The following is a 527-amino-acid chain: Putative ABC transporter peptide-binding protein BMEII0859 (527 aa).

The first 23 residues, 1 to 23 (MRLRNFYSALALSAAVFAGPLYA), serve as a signal peptide directing secretion.

This sequence belongs to the bacterial solute-binding protein 5 family. The complex is composed of two ATP-binding proteins (BMEII0863 and BMEII0864), two transmembrane proteins (BMEII0860 and BMEII0861) and a solute-binding protein (BMEII0859).

The protein localises to the periplasm. In terms of biological role, probably part of an ABC transporter complex that could be involved in peptide import. The chain is Putative ABC transporter peptide-binding protein BMEII0859 from Brucella melitensis biotype 1 (strain ATCC 23456 / CCUG 17765 / NCTC 10094 / 16M).